The following is a 179-amino-acid chain: Large ribosomal subunit protein uL6 (179 aa).

It belongs to the universal ribosomal protein uL6 family. As to quaternary structure, part of the 50S ribosomal subunit.

Functionally, this protein binds to the 23S rRNA, and is important in its secondary structure. It is located near the subunit interface in the base of the L7/L12 stalk, and near the tRNA binding site of the peptidyltransferase center. The polypeptide is Large ribosomal subunit protein uL6 (Chlorobium chlorochromatii (strain CaD3)).